Consider the following 442-residue polypeptide: Tubulin beta chain (442 aa).

GTP-binding residues include Q11, E69, S138, G142, T143, G144, N204, and N226. E69 is a Mg(2+) binding site.

Belongs to the tubulin family. In terms of assembly, dimer of alpha and beta chains. A typical microtubule is a hollow water-filled tube with an outer diameter of 25 nm and an inner diameter of 15 nM. Alpha-beta heterodimers associate head-to-tail to form protofilaments running lengthwise along the microtubule wall with the beta-tubulin subunit facing the microtubule plus end conferring a structural polarity. Microtubules usually have 13 protofilaments but different protofilament numbers can be found in some organisms and specialized cells. Requires Mg(2+) as cofactor.

Its subcellular location is the cytoplasm. It is found in the cytoskeleton. Functionally, tubulin is the major constituent of microtubules, a cylinder consisting of laterally associated linear protofilaments composed of alpha- and beta-tubulin heterodimers. Microtubules grow by the addition of GTP-tubulin dimers to the microtubule end, where a stabilizing cap forms. Below the cap, tubulin dimers are in GDP-bound state, owing to GTPase activity of alpha-tubulin. The sequence is that of Tubulin beta chain (bPT2) from Paramecium tetraurelia.